Reading from the N-terminus, the 340-residue chain is NADPH dehydrogenase (340 aa).

23 to 26 is a binding site for FMN; that stretch reads SPMC. Residue tyrosine 28 coordinates substrate. Positions 60 and 102 each coordinate FMN. 164–167 provides a ligand contact to substrate; that stretch reads HGAH. Residues arginine 215 and 307–308 each bind FMN; that span reads AR.

The protein belongs to the NADH:flavin oxidoreductase/NADH oxidase family. NamA subfamily. As to quaternary structure, homotetramer. FMN serves as cofactor.

It carries out the reaction A + NADPH + H(+) = AH2 + NADP(+). Its function is as follows. Catalyzes the reduction of the double bond of an array of alpha,beta-unsaturated aldehydes and ketones. It also reduces the nitro group of nitroester and nitroaromatic compounds. It could have a role in detoxification processes. The sequence is that of NADPH dehydrogenase from Geobacillus sp. (strain WCH70).